The chain runs to 789 residues: Larval serum protein 1 beta chain (789 aa).

The first 16 residues, 1-16 (MKIAIALLACLGLAAA), serve as a signal peptide directing secretion.

The protein belongs to the hemocyanin family. In terms of assembly, heterohexamer, composed of three subunits, alpha, beta and gamma. As to expression, larval hemolymph.

The protein resides in the secreted. It is found in the extracellular space. Its function is as follows. Larval storage protein (LSP) which may serve as a store of amino acids for synthesis of adult proteins. This is Larval serum protein 1 beta chain (Lsp1beta) from Drosophila melanogaster (Fruit fly).